A 321-amino-acid chain; its full sequence is Basic peroxidase (321 aa).

The first 30 residues, 1 to 30 (MSYHKSSGTILMVPLFMLLISVNYFMSCNA), serve as a signal peptide directing secretion. Residue Q31 is modified to Pyrrolidone carboxylic acid. Intrachain disulfides connect C41-C117, C74-C79, C123-C317, and C202-C228. Residue H72 is the Proton acceptor of the active site. The Ca(2+) site is built by D73, V76, G78, D80, and S82. Residue P165 coordinates substrate. Position 195 (H195) interacts with heme b. Ca(2+) is bound at residue T196. Residues N211 and N221 are each glycosylated (N-linked (GlcNAc...) asparagine). Ca(2+) is bound by residues D241, T244, and D249.

It belongs to the peroxidase family. Classical plant (class III) peroxidase subfamily. Requires heme b as cofactor. The cofactor is Ca(2+). N-glycosylated. Expressed in tracheary elements, roots, young and old hypocotyls, and stems in the partially glycosylated form and in roots and young hypocotyls in the fully glycosylated form. None of the isoforms is significantly expressed in leaves or cotyledons.

Its subcellular location is the secreted. It carries out the reaction 2 a phenolic donor + H2O2 = 2 a phenolic radical donor + 2 H2O. Removal of H(2)O(2), oxidation of toxic reductants, biosynthesis and degradation of lignin, suberization, auxin catabolism, response to environmental stresses such as wounding, pathogen attack and oxidative stress. These functions might be dependent on each isozyme/isoform in each plant tissue. Involved in the synthesis of highly polymerized lignins. The protein is Basic peroxidase (POD1) of Zinnia elegans (Garden zinnia).